Consider the following 344-residue polypeptide: Arginine N-succinyltransferase (344 aa).

L125 contacts succinyl-CoA. H229 (proton donor) is an active-site residue.

It belongs to the arginine N-succinyltransferase family.

The catalysed reaction is succinyl-CoA + L-arginine = N(2)-succinyl-L-arginine + CoA + H(+). The protein operates within amino-acid degradation; L-arginine degradation via AST pathway; L-glutamate and succinate from L-arginine: step 1/5. In terms of biological role, catalyzes the transfer of succinyl-CoA to arginine to produce N(2)-succinylarginine. The polypeptide is Arginine N-succinyltransferase (Salmonella arizonae (strain ATCC BAA-731 / CDC346-86 / RSK2980)).